Here is a 596-residue protein sequence, read N- to C-terminus: Elongation factor 4 (596 aa).

In terms of domain architecture, tr-type G spans 2-184; that stretch reads SHIRNFSIIA…RLVHTIPAPE (183 aa). GTP contacts are provided by residues 14–19 and 131–134; these read DHGKST and NKMD.

It belongs to the TRAFAC class translation factor GTPase superfamily. Classic translation factor GTPase family. LepA subfamily.

The protein localises to the cell inner membrane. It carries out the reaction GTP + H2O = GDP + phosphate + H(+). Its function is as follows. Required for accurate and efficient protein synthesis under certain stress conditions. May act as a fidelity factor of the translation reaction, by catalyzing a one-codon backward translocation of tRNAs on improperly translocated ribosomes. Back-translocation proceeds from a post-translocation (POST) complex to a pre-translocation (PRE) complex, thus giving elongation factor G a second chance to translocate the tRNAs correctly. Binds to ribosomes in a GTP-dependent manner. The chain is Elongation factor 4 from Pseudomonas putida (strain GB-1).